The sequence spans 173 residues: Crossover junction endodeoxyribonuclease RuvC (173 aa).

Residues aspartate 8, glutamate 67, and aspartate 139 contribute to the active site. 3 residues coordinate Mg(2+): aspartate 8, glutamate 67, and aspartate 139.

It belongs to the RuvC family. As to quaternary structure, homodimer which binds Holliday junction (HJ) DNA. The HJ becomes 2-fold symmetrical on binding to RuvC with unstacked arms; it has a different conformation from HJ DNA in complex with RuvA. In the full resolvosome a probable DNA-RuvA(4)-RuvB(12)-RuvC(2) complex forms which resolves the HJ. Mg(2+) is required as a cofactor.

It is found in the cytoplasm. It catalyses the reaction Endonucleolytic cleavage at a junction such as a reciprocal single-stranded crossover between two homologous DNA duplexes (Holliday junction).. Its function is as follows. The RuvA-RuvB-RuvC complex processes Holliday junction (HJ) DNA during genetic recombination and DNA repair. Endonuclease that resolves HJ intermediates. Cleaves cruciform DNA by making single-stranded nicks across the HJ at symmetrical positions within the homologous arms, yielding a 5'-phosphate and a 3'-hydroxyl group; requires a central core of homology in the junction. The consensus cleavage sequence is 5'-(A/T)TT(C/G)-3'. Cleavage occurs on the 3'-side of the TT dinucleotide at the point of strand exchange. HJ branch migration catalyzed by RuvA-RuvB allows RuvC to scan DNA until it finds its consensus sequence, where it cleaves and resolves the cruciform DNA. This Salmonella paratyphi C (strain RKS4594) protein is Crossover junction endodeoxyribonuclease RuvC.